We begin with the raw amino-acid sequence, 308 residues long: Acetaldehyde dehydrogenase 2 (308 aa).

An NAD(+)-binding site is contributed by 12 to 15 (SGNI). Residue cysteine 127 is the Acyl-thioester intermediate of the active site. Residues 162-170 (SAGPGTRAN) and asparagine 281 each bind NAD(+).

Belongs to the acetaldehyde dehydrogenase family.

It catalyses the reaction acetaldehyde + NAD(+) + CoA = acetyl-CoA + NADH + H(+). The chain is Acetaldehyde dehydrogenase 2 from Mycobacterium marinum (strain ATCC BAA-535 / M).